Consider the following 154-residue polypeptide: MRNYDLSPLLRQWIGFDKLASTMQGGQEPQGFPPYNIEKTDDNHYRISLALAGFKQSELDIEVEGPRLTVRGKPTPVEKQVEYLHQGLVRKEFSLTFTLAEHLNVDNAQFENGLLHIDLLRQVPEALQPQRIAIGSATPQERQVLESPEAPDQQ.

The region spanning 26–137 is the sHSP domain; it reads GQEPQGFPPY…QPQRIAIGSA (112 aa).

It belongs to the small heat shock protein (HSP20) family. In terms of assembly, homodimer. Forms homomultimers of about 100-150 subunits at optimal growth temperatures. Conformation changes to oligomers at high temperatures or high ionic concentrations. The decrease in size of the multimers is accompanied by an increase in chaperone activity.

The protein resides in the cytoplasm. Associates with aggregated proteins, together with IbpA, to stabilize and protect them from irreversible denaturation and extensive proteolysis during heat shock and oxidative stress. Aggregated proteins bound to the IbpAB complex are more efficiently refolded and reactivated by the ATP-dependent chaperone systems ClpB and DnaK/DnaJ/GrpE. Its activity is ATP-independent. This Yersinia pseudotuberculosis serotype O:1b (strain IP 31758) protein is Small heat shock protein IbpB.